A 347-amino-acid polypeptide reads, in one-letter code: Quinolinate synthase (347 aa).

Iminosuccinate is bound by residues H47 and S68. C113 is a [4Fe-4S] cluster binding site. Residues 139-141 (YAN) and S156 contribute to the iminosuccinate site. C200 provides a ligand contact to [4Fe-4S] cluster. Residues 226–228 (HPE) and T243 contribute to the iminosuccinate site. C297 contacts [4Fe-4S] cluster.

This sequence belongs to the quinolinate synthase family. Type 1 subfamily. [4Fe-4S] cluster serves as cofactor.

It localises to the cytoplasm. The catalysed reaction is iminosuccinate + dihydroxyacetone phosphate = quinolinate + phosphate + 2 H2O + H(+). It functions in the pathway cofactor biosynthesis; NAD(+) biosynthesis; quinolinate from iminoaspartate: step 1/1. Its function is as follows. Catalyzes the condensation of iminoaspartate with dihydroxyacetone phosphate to form quinolinate. The protein is Quinolinate synthase of Salmonella enteritidis PT4 (strain P125109).